Reading from the N-terminus, the 125-residue chain is Holo-[acyl-carrier-protein] synthase (125 aa).

2 residues coordinate Mg(2+): Asp-8 and Glu-56.

It belongs to the P-Pant transferase superfamily. AcpS family. It depends on Mg(2+) as a cofactor.

The protein resides in the cytoplasm. The enzyme catalyses apo-[ACP] + CoA = holo-[ACP] + adenosine 3',5'-bisphosphate + H(+). Its function is as follows. Transfers the 4'-phosphopantetheine moiety from coenzyme A to a Ser of acyl-carrier-protein. In Borrelia turicatae (strain 91E135), this protein is Holo-[acyl-carrier-protein] synthase.